Reading from the N-terminus, the 239-residue chain is MGNRRAPCCDKSQVKRGPWSDEESERLRSFILKNGHQNWRSLPKLAGLMRCGKSCRLRWINYLRPGLKRGNFTKEEEDTIIHLHQAYGNKWSKIASNFPGRTDNEIKNVWNTHLKKRLVKRSISSSSSDVTNHSVSSTSSSSSSISSVLQDVIIKSERPNQEEEFGEILVEQMACGFEVDAPQSLECLFDDSQVPPPISKPDSLQTHGKSSDHEFWSRLIEPGFDDYNEWLIFLDNQTC.

HTH myb-type domains are found at residues K11–L63 and R64–L118. 2 DNA-binding regions (H-T-H motif) span residues W39–L63 and W91–L114.

In terms of tissue distribution, expressed in cauline leaves and siliques.

Its subcellular location is the nucleus. Functionally, involved in metal ions homeostasis, including iron ions (Fe) acquisition, via the regulation of NAS4 and NAS2 genes expression. Necessary for plant survival in alkaline soil where iron availability is greatly restricted. Triggers tolerance to nickel (Ni) and zinc (Zn) ions. This chain is Transcription factor MYB10, found in Arabidopsis thaliana (Mouse-ear cress).